We begin with the raw amino-acid sequence, 123 residues long: Immunoglobulin lambda variable 5-37 (123 aa).

Positions 1–19 (MAWTPLLLLLLSHCTGSLS) are cleaved as a signal peptide. A framework-1 region spans residues 20 to 44 (QPVLTQPPSSSASPGESARLTCTLP). Residues 21-123 (PVLTQPPSSS…YCMIWPSNAS (103 aa)) form the Ig-like domain. Cys41 and Cys115 form a disulfide bridge. The complementarity-determining-1 stretch occupies residues 45–53 (SDINVGSYN). A framework-2 region spans residues 54–70 (IYWYQQKPGSPPRYLLY). The segment at 71–77 (YYSDSDK) is complementarity-determining-2. The framework-3 stretch occupies residues 78–115 (GQGSGVPSRFSGSKDASANTGILLISGLQSEDEADYYC). The interval 116–123 (MIWPSNAS) is complementarity-determining-3.

Immunoglobulins are composed of two identical heavy chains and two identical light chains; disulfide-linked.

It localises to the secreted. The protein localises to the cell membrane. In terms of biological role, v region of the variable domain of immunoglobulin light chains that participates in the antigen recognition. Immunoglobulins, also known as antibodies, are membrane-bound or secreted glycoproteins produced by B lymphocytes. In the recognition phase of humoral immunity, the membrane-bound immunoglobulins serve as receptors which, upon binding of a specific antigen, trigger the clonal expansion and differentiation of B lymphocytes into immunoglobulins-secreting plasma cells. Secreted immunoglobulins mediate the effector phase of humoral immunity, which results in the elimination of bound antigens. The antigen binding site is formed by the variable domain of one heavy chain, together with that of its associated light chain. Thus, each immunoglobulin has two antigen binding sites with remarkable affinity for a particular antigen. The variable domains are assembled by a process called V-(D)-J rearrangement and can then be subjected to somatic hypermutations which, after exposure to antigen and selection, allow affinity maturation for a particular antigen. In Homo sapiens (Human), this protein is Immunoglobulin lambda variable 5-37.